The chain runs to 172 residues: MERAAKKEAVEQLNETFRTTGVAIVAHYSGLTVAQMQTLRKQMKQAGASVKVSKNRLAKIALEGTDVVAIGSLLKGPTVIATSSDPVAAPKVAVEFAKTNENFVVLGGSMGKTVLDVNGVKALASLPSLDELRGKLVGLLVAPATKIAQLSTAPAAKLARVVQAYASKDEAA.

Belongs to the universal ribosomal protein uL10 family. In terms of assembly, part of the ribosomal stalk of the 50S ribosomal subunit. The N-terminus interacts with L11 and the large rRNA to form the base of the stalk. The C-terminus forms an elongated spine to which L12 dimers bind in a sequential fashion forming a multimeric L10(L12)X complex.

Forms part of the ribosomal stalk, playing a central role in the interaction of the ribosome with GTP-bound translation factors. The polypeptide is Large ribosomal subunit protein uL10 (Nitrobacter winogradskyi (strain ATCC 25391 / DSM 10237 / CIP 104748 / NCIMB 11846 / Nb-255)).